A 427-amino-acid polypeptide reads, in one-letter code: Four-jointed box protein 1 (427 aa).

The signal sequence occupies residues 1–18 (MRALSANLFAVLLMCALA). N-linked (GlcNAc...) asparagine glycans are attached at residues N81, N244, and N270.

It is found in the secreted. Its function is as follows. May act as an inhibitor of dendrite extension and branching. The sequence is that of Four-jointed box protein 1 (fjx1) from Xiphophorus maculatus (Southern platyfish).